The sequence spans 772 residues: Glucocorticoid receptor (772 aa).

Residues 1-15 (MDSKESLSPPGREEV) are compositionally biased toward basic and acidic residues. The interval 1–22 (MDSKESLSPPGREEVPSSVLRP) is disordered. Positions 1–415 (MDSKESLSPP…TTAAGPPPKL (415 aa)) are modulating. Position 25 is an omega-N-methylarginine (Arg25). Positions 39 to 82 (APVRVPASSPSLAPAAQPDSKQQRLAVDFPKGSASNAQQPDLSR) are disordered. The span at 44-58 (PASSPSLAPAAQPDS) shows a compositional bias: low complexity. Residues Ser47, Ser115, Ser136, and Ser143 each carry the phosphoserine modification. The tract at residues 132–186 (NRSASGADNPRSTAPAAGSAAPTEGFPKTHSDLASERQNPKGQTGGSAGSAKLHP) is disordered. A compositionally biased stretch (low complexity) spans 143–156 (STAPAAGSAAPTEG). Basic and acidic residues predominate over residues 158–170 (PKTHSDLASERQN). Phosphoserine is present on residues Ser203, Ser211, and Ser226. Residue Lys258 forms a Glycyl lysine isopeptide (Lys-Gly) (interchain with G-Cter in SUMO2) linkage. Glycyl lysine isopeptide (Lys-Gly) (interchain with G-Cter in SUMO); alternate cross-links involve residues Lys277 and Lys293. Glycyl lysine isopeptide (Lys-Gly) (interchain with G-Cter in SUMO2); alternate cross-links involve residues Lys277 and Lys293. A phosphoserine mark is found at Ser307 and Ser400. Lys414 is covalently cross-linked (Glycyl lysine isopeptide (Lys-Gly) (interchain with G-Cter in ubiquitin)). 2 NR C4-type zinc fingers span residues 416–436 (CLVC…CGSC) and 452–476 (CAGR…YRKC). Positions 416–481 (CLVCSDEASG…RYRKCLQAGM (66 aa)) form a DNA-binding region, nuclear receptor. N6-acetyllysine is present on residues Lys475, Lys487, Lys489, and Lys490. Positions 480–772 (GMNLEARKTK…NIKKLLFHQK (293 aa)) are interaction with CLOCK. Positions 482-518 (NLEARKTKKKIKGIQQTSTGVSQETSENPSNRTVVPA) are hinge. The interval 494–513 (GIQQTSTGVSQETSENPSNR) is disordered. Residues 499–513 (STGVSQETSENPSNR) are compositionally biased toward polar residues. The NR LBD domain maps to 519-753 (ALPQLTPTLV…FPEMLAEIIT (235 aa)). Positions 527-692 (LVSLLEVIEP…EIRMTYIKEL (166 aa)) are interaction with CRY1. A Glycyl lysine isopeptide (Lys-Gly) (interchain with G-Cter in SUMO) cross-link involves residue Lys698.

Belongs to the nuclear hormone receptor family. NR3 subfamily. Heteromultimeric cytoplasmic complex with HSP90AA1, HSPA1A/HSPA1B, and FKBP5 or another immunophilin such as PPID, STIP1, or the immunophilin homolog PPP5C. Upon ligand binding FKBP5 dissociates from the complex and FKBP4 takes its place, thereby linking the complex to dynein and mediating transport to the nucleus, where the complex dissociates. Probably forms a complex composed of chaperones HSP90 and HSP70, co-chaperones CDC37, PPP5C, TSC1 and client protein TSC2, CDK4, AKT, RAF1 and NR3C1; this complex does not contain co-chaperones STIP1/HOP and PTGES3/p23. Directly interacts with UNC45A. Binds to DNA as a homodimer, and as heterodimer with NR3C2 or the retinoid X receptor. Binds STAT5A and STAT5B homodimers and heterodimers. Interacts with NRIP1, POU2F1, POU2F2 and TRIM28. Interacts with several coactivator complexes, including the SMARCA4 complex, CREBBP/EP300, TADA2L (Ada complex) and p160 coactivators such as NCOA2 and NCOA6. Interaction with BAG1 inhibits transactivation. Interacts with HEXIM1 and TGFB1I1. Interacts with NCOA1. Interacts with NCOA3, SMARCA4, SMARCC1, SMARCD1, and SMARCE1. Interacts with CLOCK, CRY1 and CRY2 in a ligand-dependent fashion. Interacts with CIART. Interacts with RWDD3. Interacts with UBE2I/UBC9 and this interaction is enhanced in the presence of RWDD3. Interacts with GRIP1. Interacts with NR4A3 (via nuclear receptor DNA-binding domain), represses transcription activity of NR4A3 on the POMC promoter Nur response element (NurRE). Directly interacts with PNRC2 to attract and form a complex with UPF1 and DCP1A; the interaction leads to rapid mRNA degradation. Interacts with GSK3B. Interacts with FNIP1 and FNIP2. Interacts (via C-terminus) with HNRNPU (via C-terminus). Interacts with MCM3AP. Interacts (via domain NR LBD) with HSP90AA1 and HSP90AB1. In the absence of hormonal ligand, interacts with TACC1. Interacts (via NR LBD domain) with ZNF764 (via KRAB domain); the interaction regulates transcription factor activity of NR3C1 by directing its actions toward certain biologic pathways. In terms of processing, acetylation by CLOCK reduces its binding to glucocorticoid response elements and its transcriptional activity. Increased proteasome-mediated degradation in response to glucocorticoids. Post-translationally, phosphorylated in the absence of hormone; becomes hyperphosphorylated in the presence of glucocorticoid. The Ser-203, Ser-226 and Ser-399-phosphorylated forms are mainly cytoplasmic, and the Ser-211-phosphorylated form is nuclear. Phosphorylation at Ser-211 increases transcriptional activity. Phosphorylation at Ser-203, Ser-226 and Ser-399 decreases signaling capacity. Phosphorylation at Ser-399 may protect from glucocorticoid-induced apoptosis. Phosphorylation at Ser-203 and Ser-211 is not required in regulation of chromosome segregation. May be dephosphorylated by PPP5C, attenuates NR3C1 action. In terms of processing, ubiquitinated by UBR5, leading to its degradation: UBR5 specifically recognizes and binds ligand-bound NR3C1 when it is not associated with coactivators (NCOAs). In presence of NCOAs, the UBR5-degron is not accessible, preventing its ubiquitination and degradation. Sumoylation at Lys-277 and Lys-293 negatively regulates its transcriptional activity. Sumoylation at Lys-698 positively regulates its transcriptional activity in the presence of RWDD3. Sumoylation at Lys-277 and Lys-293 is dispensable whereas sumoylation at Lys-698 is critical for the stimulatory effect of RWDD3 on its transcriptional activity. Heat shock increases sumoylation in a RWDD3-dependent manner.

The protein resides in the cytoplasm. It localises to the nucleus. Its subcellular location is the mitochondrion. The protein localises to the cytoskeleton. It is found in the spindle. The protein resides in the microtubule organizing center. It localises to the centrosome. Its subcellular location is the chromosome. The protein localises to the nucleoplasm. Functionally, receptor for glucocorticoids (GC). Has a dual mode of action: as a transcription factor that binds to glucocorticoid response elements (GRE), both for nuclear and mitochondrial DNA, and as a modulator of other transcription factors. Affects inflammatory responses, cellular proliferation and differentiation in target tissues. Involved in chromatin remodeling. Plays a role in rapid mRNA degradation by binding to the 5' UTR of target mRNAs and interacting with PNRC2 in a ligand-dependent manner which recruits the RNA helicase UPF1 and the mRNA-decapping enzyme DCP1A, leading to RNA decay. Could act as a coactivator for STAT5-dependent transcription upon growth hormone (GH) stimulation and could reveal an essential role of hepatic GR in the control of body growth. Mediates glucocorticoid-induced apoptosis. Promotes accurate chromosome segregation during mitosis. May act as a tumor suppressor. May play a negative role in adipogenesis through the regulation of lipolytic and antilipogenic gene expression. This is Glucocorticoid receptor (NR3C1) from Oryctolagus cuniculus (Rabbit).